The primary structure comprises 273 residues: MHEAQIRVAIVGAGGRMGRQLIQAALHMEGIQPGAALEREGSSLLGSDAGELAGVGKMGVIVQSDLALVKDDFDVLVDFTRPEGTLAHLAFCRKHGKSMVIGTTGFDEAGKQAIRDAAQEIAIVFAANFSVGVNVMLKLLEKTAKVMGDYSDIEIIEAHHRHKVDAPSGTALAMGETIAHALNKDLQDCAVYSREGHTGERVPGTIGFATVRAGDIIGEHTAMFADIGERVEITHKASSRMTFANGALRSALWLKTKKNGLFDMRDVLGLDVL.

NAD(+) contacts are provided by residues glycine 12 to methionine 17 and glutamate 38. An NADP(+)-binding site is contributed by arginine 39. NAD(+)-binding positions include glycine 102 to threonine 104 and alanine 126 to phenylalanine 129. Histidine 159 functions as the Proton donor/acceptor in the catalytic mechanism. Histidine 160 serves as a coordination point for (S)-2,3,4,5-tetrahydrodipicolinate. Lysine 163 functions as the Proton donor in the catalytic mechanism. Residue glycine 169–threonine 170 coordinates (S)-2,3,4,5-tetrahydrodipicolinate.

Belongs to the DapB family. Homotetramer.

The protein localises to the cytoplasm. The catalysed reaction is (S)-2,3,4,5-tetrahydrodipicolinate + NAD(+) + H2O = (2S,4S)-4-hydroxy-2,3,4,5-tetrahydrodipicolinate + NADH + H(+). It carries out the reaction (S)-2,3,4,5-tetrahydrodipicolinate + NADP(+) + H2O = (2S,4S)-4-hydroxy-2,3,4,5-tetrahydrodipicolinate + NADPH + H(+). It functions in the pathway amino-acid biosynthesis; L-lysine biosynthesis via DAP pathway; (S)-tetrahydrodipicolinate from L-aspartate: step 4/4. Its function is as follows. Catalyzes the conversion of 4-hydroxy-tetrahydrodipicolinate (HTPA) to tetrahydrodipicolinate. This Salmonella arizonae (strain ATCC BAA-731 / CDC346-86 / RSK2980) protein is 4-hydroxy-tetrahydrodipicolinate reductase.